Consider the following 749-residue polypeptide: NAD(P)H-quinone oxidoreductase subunit 5, chloroplastic (749 aa).

16 helical membrane-spanning segments follow: residues 9–29 (WIIP…LLLV), 40–60 (WAFF…DLSI), 89–109 (IDPL…MVLI), 147–167 (IYIF…FWFT), 185–205 (GDFG…SFEF), 219–239 (NGVN…GAVA), 258–278 (TPIS…FLVA), 280–300 (LLPL…IGVI), 327–347 (LGYI…FHLI), 354–374 (ALLF…VGYS), 396–416 (ITFL…CFWS), 425–445 (WLYS…TAFY), 544–564 (TMLL…FIGV), 605–625 (IFSV…YGSV), 694–714 (GITN…KYVG), and 722–742 (LFLY…CFGI).

The protein belongs to the complex I subunit 5 family. In terms of assembly, NDH is composed of at least 16 different subunits, 5 of which are encoded in the nucleus.

The protein resides in the plastid. It localises to the chloroplast thylakoid membrane. The catalysed reaction is a plastoquinone + NADH + (n+1) H(+)(in) = a plastoquinol + NAD(+) + n H(+)(out). It carries out the reaction a plastoquinone + NADPH + (n+1) H(+)(in) = a plastoquinol + NADP(+) + n H(+)(out). In terms of biological role, NDH shuttles electrons from NAD(P)H:plastoquinone, via FMN and iron-sulfur (Fe-S) centers, to quinones in the photosynthetic chain and possibly in a chloroplast respiratory chain. The immediate electron acceptor for the enzyme in this species is believed to be plastoquinone. Couples the redox reaction to proton translocation, and thus conserves the redox energy in a proton gradient. The polypeptide is NAD(P)H-quinone oxidoreductase subunit 5, chloroplastic (ndhF) (Illicium oligandrum (Star anise)).